Here is a 549-residue protein sequence, read N- to C-terminus: GATA-type transcription factor sreA (549 aa).

The segment at 40–100 (AQAGREHPQD…TSPKSQKDTS (61 aa)) is disordered. Basic and acidic residues-rich tracts occupy residues 43-72 (GREH…HEGE) and 86-97 (HHVEKTSPKSQK). A GATA-type 1 zinc finger spans residues 106 to 130 (CSNCGTKSTPLWRRSPTGAMICNAC). The disordered stretch occupies residues 141-174 (RPTKRNRTQASPEAYHPQNQSVGSQPDPAVTGSE). Positions 180-198 (CPGGGNCNGTGGAEGCDGC) are cystein-rich region (CRR). The segment at 223 to 244 (GNSDAVPSPEAEAPARNSGQPE) is disordered. A GATA-type 2 zinc finger spans residues 251–275 (CQNCGTTVTPLWRRDENGHPICNAC). 3 disordered regions span residues 306 to 332 (RENS…PATL), 375 to 459 (NSGA…RLSS), and 482 to 535 (LGRQ…MREQ). The segment covering 309 to 331 (SPTAATHSSHGSSASPEASSPAT) has biased composition (low complexity). Over residues 383–396 (HHPPPPRLLEPGHP) the composition is skewed to pro residues. Low complexity predominate over residues 485 to 497 (QQQSQPHHPQSSP). The segment covering 498-515 (LAPTQAASQSLPGVSNMD) has biased composition (polar residues). Residues 511–549 (VSNMDNHVEDRRAKLQREAEEMREQLRAKERELAELAGQ) adopt a coiled-coil conformation. A compositionally biased stretch (basic and acidic residues) spans 516–535 (NHVEDRRAKLQREAEEMREQ).

It localises to the nucleus. In terms of biological role, GATA-type transcription repressor that regulates iron- acquisition genes through specific binding GATA sequence elements of target promoters. Iron acquisition regulation is critical for survival under both iron-limiting conditions (to acquire essential iron) and iron-replete conditions (to limit iron toxicity). SreA targets include genes encoding a number of key iron-regulated factors such as those involved in siderophore biosynthesis. The sequence is that of GATA-type transcription factor sreA from Emericella nidulans (strain FGSC A4 / ATCC 38163 / CBS 112.46 / NRRL 194 / M139) (Aspergillus nidulans).